A 37-amino-acid polypeptide reads, in one-letter code: uncharacterized protein (37 aa).

This sequence belongs to the poxviridae A56.5 protein family.

This is an uncharacterized protein from Vaccinia virus (strain Western Reserve) (VACV).